The primary structure comprises 67 residues: Protein AaeX (67 aa).

2 helical membrane-spanning segments follow: residues 3-23 and 43-63; these read LFPV…ELLL and FVWH…YLIS.

Belongs to the AaeX family.

It is found in the cell membrane. This Escherichia coli (strain K12 / DH10B) protein is Protein AaeX.